The chain runs to 117 residues: Holo-[acyl-carrier-protein] synthase (117 aa).

Asp-8 and Glu-58 together coordinate Mg(2+).

It belongs to the P-Pant transferase superfamily. AcpS family. It depends on Mg(2+) as a cofactor.

The protein resides in the cytoplasm. The enzyme catalyses apo-[ACP] + CoA = holo-[ACP] + adenosine 3',5'-bisphosphate + H(+). Transfers the 4'-phosphopantetheine moiety from coenzyme A to a Ser of acyl-carrier-protein. In Enterococcus faecalis (strain ATCC 700802 / V583), this protein is Holo-[acyl-carrier-protein] synthase.